Reading from the N-terminus, the 443-residue chain is Methyl-coenzyme M reductase I subunit beta (443 aa).

Y367 contacts coenzyme M. G369 lines the coenzyme B pocket.

This sequence belongs to the methyl-coenzyme M reductase beta subunit family. As to quaternary structure, MCR is a hexamer of two alpha, two beta, and two gamma chains, forming a dimer of heterotrimers. The cofactor is coenzyme F430.

Its subcellular location is the cytoplasm. The enzyme catalyses coenzyme B + methyl-coenzyme M = methane + coenzyme M-coenzyme B heterodisulfide. It functions in the pathway one-carbon metabolism; methyl-coenzyme M reduction; methane from methyl-coenzyme M: step 1/1. With respect to regulation, methyl-coenzyme M reductase activity is inhibited by 3-nitrooxypropanol (3-NOP) in vitro and in vivo, by oxidation of its active site Ni(I), which stops both growth and methanogenesis. Is also inhibited by the reaction product CoM-S-S-CoB. In terms of biological role, component of the methyl-coenzyme M reductase (MCR) I that catalyzes the reductive cleavage of methyl-coenzyme M (CoM-S-CH3 or 2-(methylthio)ethanesulfonate) using coenzyme B (CoB or 7-mercaptoheptanoylthreonine phosphate) as reductant which results in the production of methane and the mixed heterodisulfide of CoB and CoM (CoM-S-S-CoB). This is the final step in methanogenesis. Neither N-6-mercaptohexanoylthreonine phosphate (H-S-HxoTP) nor N-8-mercaptooctanoylthreonine phosphate (H-SOcoTP) nor any other thiol compound such as CoA or CoM can substitute for CoB as the electron donor. This chain is Methyl-coenzyme M reductase I subunit beta (mcrB), found in Methanothermobacter marburgensis (strain ATCC BAA-927 / DSM 2133 / JCM 14651 / NBRC 100331 / OCM 82 / Marburg) (Methanobacterium thermoautotrophicum).